The primary structure comprises 258 residues: 14-3-3-like protein F (258 aa).

Belongs to the 14-3-3 family.

This is 14-3-3-like protein F from Nicotiana tabacum (Common tobacco).